The chain runs to 438 residues: Transcription termination factor Rho (438 aa).

Residues 70–145 (YILFTGILEI…LKIEAINYLP (76 aa)) form the Rho RNA-BD domain. ATP contacts are provided by residues 188 to 193 (GKGQRA), 200 to 205 (RTGKTE), and R231.

It belongs to the Rho family. As to quaternary structure, homohexamer. The homohexamer assembles into an open ring structure.

Its function is as follows. Facilitates transcription termination by a mechanism that involves Rho binding to the nascent RNA, activation of Rho's RNA-dependent ATPase activity, and release of the mRNA from the DNA template. In Helicobacter pylori (strain J99 / ATCC 700824) (Campylobacter pylori J99), this protein is Transcription termination factor Rho.